The sequence spans 271 residues: Dehydrodolichyl diphosphate synthase 7 (271 aa).

Residues 24 to 41 (FLFRVLCVGPIPTNISFI) form a helical membrane-spanning segment.

This sequence belongs to the UPP synthase family. Mg(2+) serves as cofactor.

The protein localises to the endoplasmic reticulum membrane. It participates in protein modification; protein glycosylation. Its function is as follows. Catalyzes cis-prenyl chain elongation to produce the polyprenyl backbone of dolichol, a glycosyl carrier-lipid required for the biosynthesis of several classes of glycoprotein. The chain is Dehydrodolichyl diphosphate synthase 7 from Arabidopsis thaliana (Mouse-ear cress).